We begin with the raw amino-acid sequence, 321 residues long: Probable arabinan endo-1,5-alpha-L-arabinosidase A (321 aa).

An N-terminal signal peptide occupies residues 1 to 19; sequence MSASAFVAVASCLAALVHG. The active-site Proton acceptor is D34. E200 serves as the catalytic Proton donor.

This sequence belongs to the glycosyl hydrolase 43 family.

It localises to the secreted. It carries out the reaction Endohydrolysis of (1-&gt;5)-alpha-arabinofuranosidic linkages in (1-&gt;5)-arabinans.. It participates in glycan metabolism; L-arabinan degradation. Endo-1,5-alpha-L-arabinanase involved in degradation of pectin. Its preferred substrate is linear 1,5-alpha-L-arabinan. The chain is Probable arabinan endo-1,5-alpha-L-arabinosidase A (abnA) from Neosartorya fischeri (strain ATCC 1020 / DSM 3700 / CBS 544.65 / FGSC A1164 / JCM 1740 / NRRL 181 / WB 181) (Aspergillus fischerianus).